Here is a 305-residue protein sequence, read N- to C-terminus: Tetraspanin-12 (305 aa).

The Cytoplasmic portion of the chain corresponds to 1–12; sequence MAREDSVKCLRC. Residues Cys-9 and Cys-12 are each lipidated (S-palmitoyl cysteine). Residues 13–33 form a helical membrane-spanning segment; the sequence is LLYALNLLFWLMSISVLAVSA. The Extracellular portion of the chain corresponds to 34-59; that stretch reads WMRDYLNNVLTLTAETRVEEAVILTY. The chain crosses the membrane as a helical span at residues 60 to 80; that stretch reads FPVVHPVMIAVCCFLIIVGML. Cys-83 carries S-palmitoyl cysteine lipidation. Residues 90–110 traverse the membrane as a helical segment; sequence LLLLAWYFGTLLVIFCVELAC. The Extracellular portion of the chain corresponds to 111–224; sequence GVWTYEQEVM…RGTKQLQVLR (114 aa). A helical transmembrane segment spans residues 225 to 245; the sequence is FLGISIGVTQILAMILTITLL. At 246–305 the chain is on the cytoplasmic side; that stretch reads WALYYDRREPGTDQMLSLKNDASQHLSCHSVELLKPSLSRIFEHTSMANSFNTHFEMEEL.

This sequence belongs to the tetraspanin (TM4SF) family. Component of a complex, at least composed of TSPAN12, FZD4 and norrin (NDP). Interacts (when palmitoylated) with ADAM10. Interacts with MMP14/MT1-MMP. Post-translationally, palmitoylated; required for interaction with ADAM10. The precise position of palmitoylated residues is unclear and occurs either on Cys-9, Cys-12 and/or Cys-83.

The protein resides in the cell membrane. In terms of biological role, regulator of cell surface receptor signal transduction. Plays a central role in retinal vascularization by regulating norrin (NDP) signal transduction. Acts in concert with norrin (NDP) to promote FZD4 multimerization and subsequent activation of FZD4, leading to promote accumulation of beta-catenin (CTNNB1) and stimulate LEF/TCF-mediated transcriptional programs. Suprisingly, it only activates the norrin (NDP)-dependent activation of FZD4, while it does not activate the Wnt-dependent activation of FZD4, suggesting the existence of a Wnt-independent signaling that also promote accumulation the beta-catenin (CTNNB1). Acts as a regulator of membrane proteinases such as ADAM10 and MMP14/MT1-MMP. Activates ADAM10-dependent cleavage activity of amyloid precursor protein (APP). Activates MMP14/MT1-MMP-dependent cleavage activity. This chain is Tetraspanin-12 (Tspan12), found in Rattus norvegicus (Rat).